The following is a 385-amino-acid chain: Cytochrome b (385 aa).

4 consecutive transmembrane segments (helical) span residues 34-54, 78-99, 114-134, and 179-199; these read FGSL…LLTM, WFIR…FIHI, WYSG…GYVL, and FLVL…IHLV. Heme b contacts are provided by histidine 84 and histidine 98. Heme b is bound by residues histidine 183 and histidine 197. Histidine 202 is an a ubiquinone binding site. Transmembrane regions (helical) follow at residues 227 to 247, 289 to 309, 321 to 341, and 348 to 368; these read FKDI…SLLL, LAGI…PILI, LMQV…WLGA, and FILM…VMFP.

The protein belongs to the cytochrome b family. The cytochrome bc1 complex contains 3 respiratory subunits (MT-CYB, CYC1 and UQCRFS1), 2 core proteins (UQCRC1 and UQCRC2) and probably 6 low-molecular weight proteins. Heme b serves as cofactor.

Its subcellular location is the mitochondrion inner membrane. In terms of biological role, component of the ubiquinol-cytochrome c reductase complex (complex III or cytochrome b-c1 complex) that is part of the mitochondrial respiratory chain. The b-c1 complex mediates electron transfer from ubiquinol to cytochrome c. Contributes to the generation of a proton gradient across the mitochondrial membrane that is then used for ATP synthesis. The sequence is that of Cytochrome b (MT-CYB) from Eptatretus burgeri (Inshore hagfish).